A 270-amino-acid chain; its full sequence is Tetraspanin-17 (270 aa).

Topologically, residues 1-19 (MPGKHQHFQEPEVGCCGKY) are cytoplasmic. Residues 20–40 (FLFGFNIVFWVLGALFLAIGL) traverse the membrane as a helical segment. Over 41 to 63 (WAWSEKGVLSNISALTDLGGLDP) the chain is Extracellular. An N-linked (GlcNAc...) asparagine glycan is attached at Asn51. Residues 64 to 84 (VWLFVVVGGVMSVLGFAGCIG) form a helical membrane-spanning segment. The Cytoplasmic segment spans residues 85 to 94 (ALRENTFLLK). The helical transmembrane segment at 95–115 (FFSVFLGLIFFLELATGILAF) threads the bilayer. The Extracellular portion of the chain corresponds to 116-234 (VFKDWIRDQL…GQFEKWLQDN (119 aa)). Cystine bridges form between Cys155/Cys223, Cys156/Cys188, Cys172/Cys182, and Cys189/Cys202. Asn171 carries an N-linked (GlcNAc...) asparagine glycan. A helical membrane pass occupies residues 235-255 (LIVVAGVFVGIALLQIFGICL). Over 256 to 270 (AQNLVSDIKAVKANW) the chain is Cytoplasmic.

This sequence belongs to the tetraspanin (TM4SF) family. Interacts with ADAM10; the interaction influences ADAM10 substrate specificity, endocytosis and turnover.

The protein resides in the cell membrane. Its function is as follows. Part of TspanC8 subgroup, composed of 6 members that interact with the transmembrane metalloprotease ADAM10. This interaction is required for ADAM10 exit from the endoplasmic reticulum and for enzymatic maturation and trafficking to the cell surface as well as substrate specificity. Different TspanC8/ADAM10 complexes have distinct substrates. Seems to regulate VE-cadherin expression in endothelial cells probably through interaction with ADAM10, promoting leukocyte transmigration. The chain is Tetraspanin-17 (TSPAN17) from Bos taurus (Bovine).